The following is a 514-amino-acid chain: Peptide chain release factor 3 (514 aa).

Residues 8–268 (KKRRTFAIIS…TFLEFAPEPH (261 aa)) form the tr-type G domain. Residues 17-24 (SHPDAGKT), 85-89 (DTPGH), and 139-142 (NKLD) each bind GTP.

The protein belongs to the TRAFAC class translation factor GTPase superfamily. Classic translation factor GTPase family. PrfC subfamily.

It is found in the cytoplasm. Functionally, increases the formation of ribosomal termination complexes and stimulates activities of RF-1 and RF-2. It binds guanine nucleotides and has strong preference for UGA stop codons. It may interact directly with the ribosome. The stimulation of RF-1 and RF-2 is significantly reduced by GTP and GDP, but not by GMP. This chain is Peptide chain release factor 3, found in Streptococcus agalactiae serotype Ia (strain ATCC 27591 / A909 / CDC SS700).